Reading from the N-terminus, the 159-residue chain is Probable inactive acireductone dioxygenase 1 (159 aa).

Belongs to the acireductone dioxygenase (ARD) family.

The protein resides in the cytoplasm. It is found in the nucleus. Its function is as follows. Probable inactive acireductone dioxygenase. This chain is Probable inactive acireductone dioxygenase 1, found in Caenorhabditis elegans.